Here is an 868-residue protein sequence, read N- to C-terminus: DNA topoisomerase 1 (868 aa).

The Toprim domain maps to lysine 3–isoleucine 147. Glutamate 9 lines the Mg(2+) pocket. A disordered region spans residues isoleucine 34–arginine 70. Mg(2+) is bound at residue aspartate 116. The region spanning aspartate 163–leucine 580 is the Topo IA-type catalytic domain. Residues serine 197–glutamine 202 form an interaction with DNA region. Catalysis depends on tyrosine 324, which acts as the O-(5'-phospho-DNA)-tyrosine intermediate. 3 consecutive C4-type zinc fingers follow at residues cysteine 602–cysteine 633, cysteine 664–cysteine 691, and cysteine 713–cysteine 738.

Belongs to the type IA topoisomerase family. Monomer. The cofactor is Mg(2+).

It catalyses the reaction ATP-independent breakage of single-stranded DNA, followed by passage and rejoining.. In terms of biological role, releases the supercoiling and torsional tension of DNA, which is introduced during the DNA replication and transcription, by transiently cleaving and rejoining one strand of the DNA duplex. Introduces a single-strand break via transesterification at a target site in duplex DNA. The scissile phosphodiester is attacked by the catalytic tyrosine of the enzyme, resulting in the formation of a DNA-(5'-phosphotyrosyl)-enzyme intermediate and the expulsion of a 3'-OH DNA strand. The free DNA strand then undergoes passage around the unbroken strand, thus removing DNA supercoils. Finally, in the religation step, the DNA 3'-OH attacks the covalent intermediate to expel the active-site tyrosine and restore the DNA phosphodiester backbone. This Pseudomonas aeruginosa (strain ATCC 15692 / DSM 22644 / CIP 104116 / JCM 14847 / LMG 12228 / 1C / PRS 101 / PAO1) protein is DNA topoisomerase 1.